Here is a 363-residue protein sequence, read N- to C-terminus: tRNA/tmRNA (uracil-C(5))-methyltransferase (363 aa).

S-adenosyl-L-methionine is bound by residues Gln-187, Tyr-215, Asn-220, Glu-236, and Asp-296. Residue Cys-321 is the Nucleophile of the active site. The Proton acceptor role is filled by Glu-355.

Belongs to the class I-like SAM-binding methyltransferase superfamily. RNA M5U methyltransferase family. TrmA subfamily.

It carries out the reaction uridine(54) in tRNA + S-adenosyl-L-methionine = 5-methyluridine(54) in tRNA + S-adenosyl-L-homocysteine + H(+). The catalysed reaction is uridine(341) in tmRNA + S-adenosyl-L-methionine = 5-methyluridine(341) in tmRNA + S-adenosyl-L-homocysteine + H(+). Functionally, dual-specificity methyltransferase that catalyzes the formation of 5-methyluridine at position 54 (m5U54) in all tRNAs, and that of position 341 (m5U341) in tmRNA (transfer-mRNA). This is tRNA/tmRNA (uracil-C(5))-methyltransferase from Pseudomonas aeruginosa (strain ATCC 15692 / DSM 22644 / CIP 104116 / JCM 14847 / LMG 12228 / 1C / PRS 101 / PAO1).